Consider the following 504-residue polypeptide: MLQDKQAIIQVLGSILKDPTILSESNKYKITSDDFPSRFHSILFFAMSNLFHQGTEVLNDVEIDGYLKDYDIQYKIFHDNKGLEYIEKIQELAVVENFDYHYKRLKKFSLLREMDGLGFDIKEIYDESLIDPKEQEKMQEQFDKKSIDEILTAYEMKIVDIKEKFRTSSESVGIQGGEGINELLDSFEESPDIGVPLNSEMLTSIFRGSRKKKFYLRSSITGGGKTRNMVADACRLSATELYDPKKKEWVSNPWSESSTVISTEMMAEELQSLALAYISSVEEKKILRNTINEKEKQLVRKAAKVLQESNIWFEHLPDFNIQEIERTIEKNVIKNNVEYVYFDYIHSSVTIFSEMSKKSGVNLREDQILLLMSDKLKGLCNKYDVYMMSATQLNGDWKEAWLKGQVIDASYLRGSKAIADKTDAAMIILPLSKKEKDAIDPILKEGFYPEPNFVTHVFKNRGNEYDKVKVFSHINMGNMRIKDCFTTNLDNELITVEKLNIKAG.

This is SPbeta prophage-derived uncharacterized protein YorI (yorI) from Bacillus subtilis (strain 168).